Consider the following 727-residue polypeptide: Sodium-dependent neutral amino acid transporter SLC6A17 (727 aa).

At 1–69 (MPKNSKVTQR…RPAWNSKLQY (69 aa)) the chain is on the cytoplasmic side. A phosphoserine mark is found at S13 and S20. Residues 70-90 (ILAQIGFSVGLGNIWRFPYLC) form a helical membrane-spanning segment. Over 91–95 (QKNGG) the chain is Extracellular. Residues 96 to 116 (GAYLVPYLVLLIIIGIPLFFL) form a helical membrane-spanning segment. Residues 117-147 (ELAVGQRIRRGSIGVWHYICPRLGGIGFSSC) are Cytoplasmic-facing. The helical transmembrane segment at 148 to 168 (IVCLFVGLYYNVIIGWSIFYF) threads the bilayer. The Extracellular segment spans residues 169–222 (FKSFQYPLPWSECPVVRNGSVAVVEAECEKSSATTYFWYREALDISDSISESGG). The N-linked (GlcNAc...) asparagine glycan is linked to N186. The chain crosses the membrane as a helical span at residues 223–243 (LNWKMTLCLLVAWSIVGMAVV). The Cytoplasmic portion of the chain corresponds to 244-253 (KGIQSSGKVM). A helical transmembrane segment spans residues 254–274 (YFSSLFPYVVLACFLVRGLLL). At 275–300 (RGAVDGILHMFTPKLDKMLDPQVWRE) the chain is on the extracellular side. The chain crosses the membrane as a helical span at residues 301–321 (AATQVFFALGLGFGGVIAFSS). Residues 322-334 (YNKQDNNCHFDAA) are Cytoplasmic-facing. The chain crosses the membrane as a helical span at residues 335–355 (LVSFINFFTSVLATLVVFAVL). Residues 356 to 460 (GFKANIMNEK…HFPASPFWSV (105 aa)) lie on the Extracellular side of the membrane. At Y377 the chain carries Phosphotyrosine. N393 carries an N-linked (GlcNAc...) asparagine glycan. The helical transmembrane segment at 461 to 481 (MFFLMLINLGLGSMIGTMAGI) threads the bilayer. Residues 482-490 (TTPIIDTFK) lie on the Cytoplasmic side of the membrane. The chain crosses the membrane as a helical span at residues 491–511 (VPKEMFTVGCCVFAFLVGLLF). Residues 512-527 (VQRSGNYFVTMFDDYS) are Extracellular-facing. Residues 528 to 548 (ATLPLTLIVILENIAVAWIYG) traverse the membrane as a helical segment. At 549-573 (TKKFMQELTEMLGFRPYRFYFYMWK) the chain is on the cytoplasmic side. The helical transmembrane segment at 574–594 (FVSPLCMAVLTTASIIQLGVT) threads the bilayer. Over 595-617 (PPGYSAWIKEEAAERYLYFPNWA) the chain is Extracellular. A helical transmembrane segment spans residues 618 to 638 (MALLITLIVVATLPIPVVFVL). Over 639-727 (RHFHLLSDGS…LLASTPESEL (89 aa)) the chain is Cytoplasmic. 2 positions are modified to phosphoserine: S665 and S701. The tract at residues 680-727 (VPSEAPSPMPTHRSYLGPGSTSPLETSGNPNGRYGSGYLLASTPESEL) is disordered. Residues 698–709 (GSTSPLETSGNP) are compositionally biased toward polar residues.

The protein belongs to the sodium:neurotransmitter symporter (SNF) (TC 2.A.22) family.

It is found in the cytoplasmic vesicle. It localises to the secretory vesicle. The protein localises to the synaptic vesicle membrane. Its subcellular location is the postsynapse. The protein resides in the presynapse. The enzyme catalyses L-proline(in) + Na(+)(in) = L-proline(out) + Na(+)(out). It catalyses the reaction L-leucine(in) + Na(+)(in) = L-leucine(out) + Na(+)(out). It carries out the reaction glycine(in) + Na(+)(in) = glycine(out) + Na(+)(out). The catalysed reaction is L-alanine(in) + Na(+)(in) = L-alanine(out) + Na(+)(out). The enzyme catalyses L-glutamine(in) + Na(+)(in) = L-glutamine(out) + Na(+)(out). Its function is as follows. Synaptic vesicle transporter with apparent selectivity for neutral amino acids. The transport is sodium-coupled but chloride-independent, likely driven by the proton electrochemical gradient generated by vacuolar H(+)-ATPase in an overall electrogenic mechanism. May contribute to the synaptic uptake of neurotransmitter precursors in a process coupled in part to vesicle exocytosis. The chain is Sodium-dependent neutral amino acid transporter SLC6A17 from Homo sapiens (Human).